The sequence spans 730 residues: Kinesin-like protein KIF2C (730 aa).

Positions 1 to 256 are globular; the sequence is MERLVATRLV…MDCHRISMAD (256 aa). The segment at 79–98 is disordered; that stretch reads NMPPQRNVSSQNHKRKTISK. Residues 211–242 are negative regulator of microtubule-binding; the sequence is EQRAQNYERRMKRAQDYDTSVPNWEFGKMIKE. A Kinesin motor domain is found at 262 to 592; that stretch reads RICVCVRKRP…LRYADRVKEL (331 aa). ATP is bound by residues Arg-268 and 352–359; that span reads GQTGSGKT. The stretch at 599 to 730 forms a coiled coil; it reads TNDDNLQMED…QISKKKRSNK (132 aa).

Belongs to the TRAFAC class myosin-kinesin ATPase superfamily. Kinesin family. MCAK/KIF2 subfamily.

The protein localises to the cytoplasm. It is found in the cytoskeleton. The protein resides in the nucleus. Its subcellular location is the chromosome. It localises to the centromere. The protein localises to the kinetochore. Promotes ATP-dependent removal of tubulin dimers from microtubules. Regulates the turnover of microtubules at the kinetochore and functions in chromosome segregation during mitosis. May play a role in chromosome congression and may be required for the lateral to end-on conversion of the chromosome-microtubule attachment. The polypeptide is Kinesin-like protein KIF2C (kif2c) (Xenopus laevis (African clawed frog)).